A 187-amino-acid polypeptide reads, in one-letter code: Putative glutathione-dependent formaldehyde-activating enzyme (187 aa).

A CENP-V/GFA domain is found at 20–166 (FPGGKLYCHC…FESVGLKTYD (147 aa)). Residues cysteine 27, cysteine 29, cysteine 48, cysteine 50, cysteine 53, cysteine 95, and cysteine 98 each contribute to the Zn(2+) site.

The protein belongs to the Gfa family. The cofactor is Zn(2+).

It carries out the reaction S-(hydroxymethyl)glutathione = glutathione + formaldehyde. It participates in one-carbon metabolism; formaldehyde degradation; formate from formaldehyde (glutathione route): step 1/3. Functionally, catalyzes the condensation of formaldehyde and glutathione to S-hydroxymethylglutathione. The sequence is that of Putative glutathione-dependent formaldehyde-activating enzyme from Talaromyces marneffei (strain ATCC 18224 / CBS 334.59 / QM 7333) (Penicillium marneffei).